A 180-amino-acid chain; its full sequence is Superoxide dismutase [Cu-Zn] (180 aa).

Residues Met1 to Ala19 form the signal peptide. His68, His70, and His85 together coordinate Cu cation. The cysteines at positions 79 and 171 are disulfide-linked. Zn(2+)-binding residues include His85, His93, His102, and Asp105. Residue His142 coordinates Cu cation.

This sequence belongs to the Cu-Zn superoxide dismutase family. Homodimer. Requires Cu cation as cofactor. It depends on Zn(2+) as a cofactor.

It is found in the cytoplasm. The enzyme catalyses 2 superoxide + 2 H(+) = H2O2 + O2. Its activity is regulated as follows. The insertion of copper which activates the protein requires glutathione. This is independent of copper chaperone for SOD1 (CCS), which activates orthologs. Its function is as follows. Protects cells against oxidative stress by converting superoxide radicals to hydrogen peroxide. Required for normal brood size. May be involved in regulating mpk-1 phosphorylation downstream of phosphatase ptp-2 during oocyte maturation. The protein is Superoxide dismutase [Cu-Zn] (sod-1) of Caenorhabditis elegans.